The sequence spans 306 residues: Acetyl-coenzyme A carboxylase carboxyl transferase subunit beta (306 aa).

The CoA carboxyltransferase N-terminal domain occupies 25–294; sequence LWIKDPTSGE…VFNPSDPSPT (270 aa). The interval 286 to 306 is disordered; the sequence is FNPSDPSPTDSQTSLSTTKAA. Residues 288-306 are compositionally biased toward low complexity; the sequence is PSDPSPTDSQTSLSTTKAA.

This sequence belongs to the AccD/PCCB family. As to quaternary structure, acetyl-CoA carboxylase is a heterohexamer composed of biotin carboxyl carrier protein (AccB), biotin carboxylase (AccC) and two subunits each of ACCase subunit alpha (AccA) and ACCase subunit beta (AccD).

It is found in the cytoplasm. It catalyses the reaction N(6)-carboxybiotinyl-L-lysyl-[protein] + acetyl-CoA = N(6)-biotinyl-L-lysyl-[protein] + malonyl-CoA. It participates in lipid metabolism; malonyl-CoA biosynthesis; malonyl-CoA from acetyl-CoA: step 1/1. In terms of biological role, component of the acetyl coenzyme A carboxylase (ACC) complex. Biotin carboxylase (BC) catalyzes the carboxylation of biotin on its carrier protein (BCCP) and then the CO(2) group is transferred by the transcarboxylase to acetyl-CoA to form malonyl-CoA. This Bartonella grahamii (strain as4aup) protein is Acetyl-coenzyme A carboxylase carboxyl transferase subunit beta.